Reading from the N-terminus, the 453-residue chain is MSGDAAALWPRVAEGLRRDLGARTFDHWLKPVRFADYCALSGVVTLETASRFSANWINERFGDRLELAWRQQLPAVRSVSVRGGVAATERAATLASVPLPTFDAPAAPAANPALLGFDPRLSFDRFVVARSNILAANAARRMAMVERPQFNPLYLCSGTGQGKTHLLQAIAQDYAAAHPTATIILMSAEKFMLEFVGAMRGGDMMAFKARLRAADLLLLDDLQFVIGKNSTQEELLHTIDDLMTAGKRLVVTADRPPAMLDGVEARLLSRLSGGLVADIEAPEDDLRERIIRQRLAAMPMVEVPDDVIAWLVKHFTRNIRELEGALNKLLAYAALTGARIDLMLAEDRLAENVRSARPRITIDEIQRAVCAHYRLDRSDMSSKRRVRAVARPRQVAMYLAKELTPRSYPEIGRRFGGRDHSTVIHAVRTVEALRVADSELDAEIAAIRRSLNS.

The interval 1 to 76 (MSGDAAALWP…LAWRQQLPAV (76 aa)) is domain I, interacts with DnaA modulators. The segment at 76 to 115 (VRSVSVRGGVAATERAATLASVPLPTFDAPAAPAANPALL) is domain II. Residues 116-333 (GFDPRLSFDR…GALNKLLAYA (218 aa)) form a domain III, AAA+ region region. ATP is bound by residues G160, G162, K163, and T164. Positions 334–453 (ALTGARIDLM…IAAIRRSLNS (120 aa)) are domain IV, binds dsDNA.

Belongs to the DnaA family. As to quaternary structure, oligomerizes as a right-handed, spiral filament on DNA at oriC.

Its subcellular location is the cytoplasm. Plays an essential role in the initiation and regulation of chromosomal replication. ATP-DnaA binds to the origin of replication (oriC) to initiate formation of the DNA replication initiation complex once per cell cycle. Binds the DnaA box (a 9 base pair repeat at the origin) and separates the double-stranded (ds)DNA. Forms a right-handed helical filament on oriC DNA; dsDNA binds to the exterior of the filament while single-stranded (ss)DNA is stabiized in the filament's interior. The ATP-DnaA-oriC complex binds and stabilizes one strand of the AT-rich DNA unwinding element (DUE), permitting loading of DNA polymerase. After initiation quickly degrades to an ADP-DnaA complex that is not apt for DNA replication. Binds acidic phospholipids. In Sphingopyxis alaskensis (strain DSM 13593 / LMG 18877 / RB2256) (Sphingomonas alaskensis), this protein is Chromosomal replication initiator protein DnaA.